Consider the following 268-residue polypeptide: Phosphatidylglycerol--prolipoprotein diacylglyceryl transferase (268 aa).

3 helical membrane-spanning segments follow: residues 25 to 45 (WYGV…TKVF), 57 to 77 (YLFY…HCFF), and 93 to 113 (VWHG…AVYF). Arginine 142 provides a ligand contact to a 1,2-diacyl-sn-glycero-3-phospho-(1'-sn-glycerol). Transmembrane regions (helical) follow at residues 151 to 171 (IIGI…DLLP), 175 to 195 (VQLY…LAYW), 204 to 224 (GLLL…LEFF), and 236 to 256 (PLSV…LLIF).

Belongs to the Lgt family.

Its subcellular location is the cell inner membrane. It catalyses the reaction L-cysteinyl-[prolipoprotein] + a 1,2-diacyl-sn-glycero-3-phospho-(1'-sn-glycerol) = an S-1,2-diacyl-sn-glyceryl-L-cysteinyl-[prolipoprotein] + sn-glycerol 1-phosphate + H(+). It functions in the pathway protein modification; lipoprotein biosynthesis (diacylglyceryl transfer). Catalyzes the transfer of the diacylglyceryl group from phosphatidylglycerol to the sulfhydryl group of the N-terminal cysteine of a prolipoprotein, the first step in the formation of mature lipoproteins. This Chloroherpeton thalassium (strain ATCC 35110 / GB-78) protein is Phosphatidylglycerol--prolipoprotein diacylglyceryl transferase.